The sequence spans 646 residues: Threonine--tRNA ligase (646 aa).

In terms of domain architecture, TGS spans 1 to 63; that stretch reads MAQISLTFPD…EADAKIAIHT (63 aa). Positions 247–544 are catalytic; the sequence is DHRKLGKEME…LIENYAGKLP (298 aa). Residues Cys344, His395, and His521 each coordinate Zn(2+).

Belongs to the class-II aminoacyl-tRNA synthetase family. Homodimer. Zn(2+) serves as cofactor.

Its subcellular location is the cytoplasm. It catalyses the reaction tRNA(Thr) + L-threonine + ATP = L-threonyl-tRNA(Thr) + AMP + diphosphate + H(+). Its function is as follows. Catalyzes the attachment of threonine to tRNA(Thr) in a two-step reaction: L-threonine is first activated by ATP to form Thr-AMP and then transferred to the acceptor end of tRNA(Thr). Also edits incorrectly charged L-seryl-tRNA(Thr). This is Threonine--tRNA ligase from Cereibacter sphaeroides (strain ATCC 17025 / ATH 2.4.3) (Rhodobacter sphaeroides).